Here is a 286-residue protein sequence, read N- to C-terminus: Pantothenate synthetase (286 aa).

30 to 37 (MGCFHQGH) lines the ATP pocket. His-37 acts as the Proton donor in catalysis. Gln-61 is a (R)-pantoate binding site. A beta-alanine-binding site is contributed by Gln-61. 147 to 150 (GEKD) is a binding site for ATP. Gln-153 is a binding site for (R)-pantoate. Residue 184–187 (MSSR) coordinates ATP.

Belongs to the pantothenate synthetase family. In terms of assembly, homodimer.

Its subcellular location is the cytoplasm. It catalyses the reaction (R)-pantoate + beta-alanine + ATP = (R)-pantothenate + AMP + diphosphate + H(+). Its pathway is cofactor biosynthesis; (R)-pantothenate biosynthesis; (R)-pantothenate from (R)-pantoate and beta-alanine: step 1/1. Its function is as follows. Catalyzes the condensation of pantoate with beta-alanine in an ATP-dependent reaction via a pantoyl-adenylate intermediate. This Desulfotalea psychrophila (strain LSv54 / DSM 12343) protein is Pantothenate synthetase.